A 251-amino-acid chain; its full sequence is Ditrans,polycis-undecaprenyl-diphosphate synthase ((2E,6E)-farnesyl-diphosphate specific) (251 aa).

The active site involves Asp20. Asp20 lines the Mg(2+) pocket. Residues 21–24 (GNGR), Trp25, Arg33, His37, and 65–67 (SSE) contribute to the substrate site. Residue Asn68 is the Proton acceptor of the active site. Substrate contacts are provided by residues Trp69, Arg71, Arg188, and 194–196 (RIS). Glu207 is a binding site for Mg(2+).

The protein belongs to the UPP synthase family. Homodimer. Mg(2+) serves as cofactor.

The enzyme catalyses 8 isopentenyl diphosphate + (2E,6E)-farnesyl diphosphate = di-trans,octa-cis-undecaprenyl diphosphate + 8 diphosphate. Catalyzes the sequential condensation of isopentenyl diphosphate (IPP) with (2E,6E)-farnesyl diphosphate (E,E-FPP) to yield (2Z,6Z,10Z,14Z,18Z,22Z,26Z,30Z,34E,38E)-undecaprenyl diphosphate (di-trans,octa-cis-UPP). UPP is the precursor of glycosyl carrier lipid in the biosynthesis of bacterial cell wall polysaccharide components such as peptidoglycan and lipopolysaccharide. The chain is Ditrans,polycis-undecaprenyl-diphosphate synthase ((2E,6E)-farnesyl-diphosphate specific) from Vibrio vulnificus (strain CMCP6).